Reading from the N-terminus, the 305-residue chain is Glycine--tRNA ligase alpha subunit (305 aa).

This sequence belongs to the class-II aminoacyl-tRNA synthetase family. As to quaternary structure, tetramer of two alpha and two beta subunits.

Its subcellular location is the cytoplasm. It catalyses the reaction tRNA(Gly) + glycine + ATP = glycyl-tRNA(Gly) + AMP + diphosphate. This chain is Glycine--tRNA ligase alpha subunit, found in Streptococcus mutans serotype c (strain ATCC 700610 / UA159).